The primary structure comprises 1223 residues: DNA-directed RNA polymerase subunit beta'' (1223 aa).

Positions 233, 307, 314, and 317 each coordinate Zn(2+).

This sequence belongs to the RNA polymerase beta' chain family. RpoC2 subfamily. In plastids the minimal PEP RNA polymerase catalytic core is composed of four subunits: alpha, beta, beta', and beta''. When a (nuclear-encoded) sigma factor is associated with the core the holoenzyme is formed, which can initiate transcription. Zn(2+) is required as a cofactor.

The protein resides in the plastid. Its subcellular location is the chloroplast. The enzyme catalyses RNA(n) + a ribonucleoside 5'-triphosphate = RNA(n+1) + diphosphate. Functionally, DNA-dependent RNA polymerase catalyzes the transcription of DNA into RNA using the four ribonucleoside triphosphates as substrates. The polypeptide is DNA-directed RNA polymerase subunit beta'' (Mesostigma viride (Green alga)).